The following is a 228-amino-acid chain: PKHD-type hydroxylase RPE_4577 (228 aa).

One can recognise a Fe2OG dioxygenase domain in the interval 78–180 (TIFPPLFNRY…RIASFFWTQS (103 aa)). 3 residues coordinate Fe cation: His98, Asp100, and His161. Arg171 contacts 2-oxoglutarate.

Fe(2+) is required as a cofactor. It depends on L-ascorbate as a cofactor.

The protein is PKHD-type hydroxylase RPE_4577 of Rhodopseudomonas palustris (strain BisA53).